A 228-amino-acid polypeptide reads, in one-letter code: ATP-dependent dethiobiotin synthetase BioD 1 (228 aa).

Glu-13–Val-18 serves as a coordination point for ATP. Thr-17 provides a ligand contact to Mg(2+). Lys-38 is an active-site residue. Ser-42 is a substrate binding site. Residues Asp-55, Glu-116 to Gly-119, Asn-176 to Asp-177, and Pro-205 to Leu-207 contribute to the ATP site. The Mg(2+) site is built by Asp-55 and Glu-116.

It belongs to the dethiobiotin synthetase family. As to quaternary structure, homodimer. Mg(2+) is required as a cofactor.

It localises to the cytoplasm. The enzyme catalyses (7R,8S)-7,8-diammoniononanoate + CO2 + ATP = (4R,5S)-dethiobiotin + ADP + phosphate + 3 H(+). It functions in the pathway cofactor biosynthesis; biotin biosynthesis; biotin from 7,8-diaminononanoate: step 1/2. Catalyzes a mechanistically unusual reaction, the ATP-dependent insertion of CO2 between the N7 and N8 nitrogen atoms of 7,8-diaminopelargonic acid (DAPA, also called 7,8-diammoniononanoate) to form a ureido ring. The polypeptide is ATP-dependent dethiobiotin synthetase BioD 1 (Salmonella typhi).